Reading from the N-terminus, the 181-residue chain is TATA-box-binding protein (181 aa).

Repeat copies occupy residues 7–83 (VVNV…VKEL) and 98–173 (VQNM…SKTL).

The protein belongs to the TBP family.

Its function is as follows. General factor that plays a role in the activation of archaeal genes transcribed by RNA polymerase. Binds specifically to the TATA box promoter element which lies close to the position of transcription initiation. In Methanococcus maripaludis (strain DSM 14266 / JCM 13030 / NBRC 101832 / S2 / LL), this protein is TATA-box-binding protein.